The sequence spans 85 residues: Small ribosomal subunit protein bS18 (85 aa).

This sequence belongs to the bacterial ribosomal protein bS18 family. As to quaternary structure, part of the 30S ribosomal subunit. Forms a tight heterodimer with protein bS6.

Its function is as follows. Binds as a heterodimer with protein bS6 to the central domain of the 16S rRNA, where it helps stabilize the platform of the 30S subunit. This is Small ribosomal subunit protein bS18 from Solidesulfovibrio magneticus (strain ATCC 700980 / DSM 13731 / RS-1) (Desulfovibrio magneticus).